Consider the following 609-residue polypeptide: Phosphoenolpyruvate carboxykinase [GTP] (609 aa).

Residues arginine 81 and 220–222 each bind substrate; that span reads YGG. Positions 229 and 249 each coordinate Mn(2+). Substrate is bound at residue serine 271. 272–277 provides a ligand contact to GTP; sequence ACGKTN. Cysteine 273 is a catalytic residue. Aspartate 296 contributes to the Mn(2+) binding site. Residue 387–389 participates in substrate binding; that stretch reads NSR. GTP-binding positions include arginine 389, arginine 420, and 515 to 518; that span reads FGEN.

Belongs to the phosphoenolpyruvate carboxykinase [GTP] family. As to quaternary structure, monomer. Mn(2+) serves as cofactor.

Its subcellular location is the cytoplasm. The enzyme catalyses oxaloacetate + GTP = phosphoenolpyruvate + GDP + CO2. Its pathway is carbohydrate biosynthesis; gluconeogenesis. Catalyzes the conversion of oxaloacetate (OAA) to phosphoenolpyruvate (PEP), the rate-limiting step in the metabolic pathway that produces glucose from lactate and other precursors derived from the citric acid cycle. The chain is Phosphoenolpyruvate carboxykinase [GTP] from Mycobacterium ulcerans (strain Agy99).